A 137-amino-acid polypeptide reads, in one-letter code: F420H(2)-dependent biliverdin reductase (137 aa).

Coenzyme F420-(gamma-Glu)n contacts are provided by residues 36–41 (HVVAVG), 54–55 (IT), 60–61 (QK), R67, and 78–81 (GARW).

Belongs to the F420H(2)-dependent biliverdin reductase family. In terms of assembly, homodimer.

The protein localises to the cell surface. It localises to the secreted. The enzyme catalyses (4Z,15Z)-bilirubin IXalpha + oxidized coenzyme F420-(gamma-L-Glu)(n) + H(+) = biliverdin IXalpha + reduced coenzyme F420-(gamma-L-Glu)(n). Catalyzes the F420H(2)-dependent reduction of biliverdin-IXalpha at C10 position, leading to bilirubin-IXalpha, a potent antioxidant. As biliverdin-IXalpha is produced in high amounts in macrophages infected with M.tuberculosis, its reduction by Rv2074 may play a role in protecting mycobacteria against oxidative stress, aiding the persistence of M.tuberculosis infection. This Mycobacterium tuberculosis (strain CDC 1551 / Oshkosh) protein is F420H(2)-dependent biliverdin reductase.